A 267-amino-acid polypeptide reads, in one-letter code: Malonyl-[acyl-carrier protein] O-methyltransferase (267 aa).

Belongs to the methyltransferase superfamily.

It catalyses the reaction malonyl-[ACP] + S-adenosyl-L-methionine = malonyl-[ACP] methyl ester + S-adenosyl-L-homocysteine. Its pathway is cofactor biosynthesis; biotin biosynthesis. In terms of biological role, converts the free carboxyl group of a malonyl-thioester to its methyl ester by transfer of a methyl group from S-adenosyl-L-methionine (SAM). It allows to synthesize pimeloyl-ACP via the fatty acid synthetic pathway. This chain is Malonyl-[acyl-carrier protein] O-methyltransferase, found in Yersinia pestis.